Consider the following 567-residue polypeptide: Oxygen-dependent choline dehydrogenase (567 aa).

4 to 33 (DYIIIGAGSAGNVLAARLTEDADVTVLLLE) contacts FAD. The active-site Proton acceptor is the His473.

It belongs to the GMC oxidoreductase family. Requires FAD as cofactor.

The enzyme catalyses choline + A = betaine aldehyde + AH2. It carries out the reaction betaine aldehyde + NAD(+) + H2O = glycine betaine + NADH + 2 H(+). It participates in amine and polyamine biosynthesis; betaine biosynthesis via choline pathway; betaine aldehyde from choline (cytochrome c reductase route): step 1/1. In terms of biological role, involved in the biosynthesis of the osmoprotectant glycine betaine. Catalyzes the oxidation of choline to betaine aldehyde and betaine aldehyde to glycine betaine at the same rate. This is Oxygen-dependent choline dehydrogenase from Yersinia pseudotuberculosis serotype IB (strain PB1/+).